The primary structure comprises 353 residues: Quinolinate synthase (353 aa).

Iminosuccinate contacts are provided by histidine 47 and serine 68. Cysteine 113 serves as a coordination point for [4Fe-4S] cluster. Iminosuccinate is bound by residues tyrosine 139–asparagine 141 and serine 156. Cysteine 200 lines the [4Fe-4S] cluster pocket. Residues histidine 226–glutamate 228 and threonine 243 each bind iminosuccinate. Cysteine 297 serves as a coordination point for [4Fe-4S] cluster.

It belongs to the quinolinate synthase family. Type 1 subfamily. The cofactor is [4Fe-4S] cluster.

Its subcellular location is the cytoplasm. It catalyses the reaction iminosuccinate + dihydroxyacetone phosphate = quinolinate + phosphate + 2 H2O + H(+). The protein operates within cofactor biosynthesis; NAD(+) biosynthesis; quinolinate from iminoaspartate: step 1/1. Its function is as follows. Catalyzes the condensation of iminoaspartate with dihydroxyacetone phosphate to form quinolinate. The sequence is that of Quinolinate synthase from Serratia proteamaculans (strain 568).